The following is a 140-amino-acid chain: Sex-regulated protein janus-B (140 aa).

Arg-42 contacts substrate. The active-site Proton acceptor is His-69. 110 to 112 contributes to the substrate binding site; the sequence is SRT.

This sequence belongs to the janus family.

JanA and janB regulate somatic sex differentiation. The polypeptide is Sex-regulated protein janus-B (janB) (Drosophila teissieri (Fruit fly)).